Here is a 337-residue protein sequence, read N- to C-terminus: Outer membrane protein assembly factor BamC (337 aa).

Positions 1–16 (MKKWLFPFAFVATLAG) are cleaved as a signal peptide. Cys17 carries N-palmitoyl cysteine lipidation. Cys17 is lipidated: S-diacylglycerol cysteine.

It belongs to the BamC family. Part of the Bam complex.

It is found in the cell outer membrane. Functionally, part of the outer membrane protein assembly complex, which is involved in assembly and insertion of beta-barrel proteins into the outer membrane. The chain is Outer membrane protein assembly factor BamC from Pasteurella multocida (strain Pm70).